The sequence spans 297 residues: Acetaldehyde dehydrogenase (297 aa).

Position 18-21 (18-21) interacts with NAD(+); it reads TGNI. Catalysis depends on Cys133, which acts as the Acyl-thioester intermediate. Residues 165–173 and Asn275 each bind NAD(+); that span reads SAGPATRLN.

It belongs to the acetaldehyde dehydrogenase family.

It catalyses the reaction acetaldehyde + NAD(+) + CoA = acetyl-CoA + NADH + H(+). The polypeptide is Acetaldehyde dehydrogenase (Spirochaeta aurantia).